A 494-amino-acid chain; its full sequence is Transcription factor SOX-9 (494 aa).

Disordered stretches follow at residues 1 to 66 (MNLL…ESDE) and 159 to 275 (ERLR…FRDV). A compositionally biased stretch (low complexity) spans 27-42 (SDDSAGSPCPSGSGSD). Composition is skewed to basic and acidic residues over residues 56-66 (GDPDLKKESDE) and 159-174 (ERLRVQHKKDHPDYKY). The tract at residues 63–103 (ESDEDKFPVCIREAVSQVLKGYDWTLVPMPVRVNGSSKNKP) is dimerization (DIM). The tract at residues 63–103 (ESDEDKFPVCIREAVSQVLKGYDWTLVPMPVRVNGSSKNKP) is PQA. The residue at position 64 (serine 64) is a Phosphoserine. The HMG box DNA-binding region spans 105 to 173 (VKRPMNAFMV…QHKKDHPDYK (69 aa)). Serine 181 is modified (phosphoserine). The span at 211-222 (SPQSSSSISEVH) shows a compositional bias: low complexity. Positions 224–309 (PGEHSGQSQG…LPPNGHPGVP (86 aa)) are transactivation domain (TAM). 2 consecutive short sequence motifs (9aaTAD) follow at residues 277 to 286 (IGELSSDVIS) and 292 to 300 (DVNEFDQYL). Residues 326–337 (SSASSPAGAGHA) show a composition bias toward low complexity. The disordered stretch occupies residues 326-402 (SSASSPAGAG…PQQQQQQQQQ (77 aa)). Pro residues predominate over residues 344-353 (PQPPQPPAQP). The interval 372–494 (RPHIKTEQLS…QPVYTQLTRP (123 aa)) is transactivation domain (TAC). Lysine 376 participates in a covalent cross-link: Glycyl lysine isopeptide (Lys-Gly) (interchain with G-Cter in SUMO). A compositionally biased stretch (polar residues) spans 378-387 (EQLSPSHYSE). Residues 388–402 (QQQHSPQQQQQQQQQ) are compositionally biased toward low complexity. The 9aaTAD 3 motif lies at 445–453 (GGLYSTFTY). The disordered stretch occupies residues 462–494 (YTPIADTSGVPSIPQTHSPQHWEQPVYTQLTRP). Residues 470 to 494 (GVPSIPQTHSPQHWEQPVYTQLTRP) show a composition bias toward polar residues.

Interacts with SNAI2; triggers neural crest delamination in a phosphorylation dependent manner. Interacts with UBE2I. Post-translationally, phosphorylated at Ser-181 in the developing neural tube. Phosphorylation at either Ser-64 or Ser-181 is required for sumoylation, but phosphorylation is not dependent on sumoylation. Sumoylation is enhanced by PKA. Phosphorylation is required for interaction with SNAI2 to trigger neural crest delamination and for an efficient trunk neural crest delamination, whereas sumoylation plays a less significant role. Phosphorylation and sumoylation are induced by BMP signaling pathway. Sumoylated at Lys-376; phosphorylation at either Ser-64 or Ser-181 is required for sumoylation. Sumoylation is induced by BMP signaling pathway.

It is found in the nucleus. Functionally, transcription factor that plays a key role in chondrocytes differentiation and skeletal development. Specifically binds the 5'-ACAAAG-3' DNA motif present in enhancers and super-enhancers and promotes expression of genes important for chondrogenesis, including COL2A1. Plays a central role in successive steps of chondrocyte differentiation. Absolutely required for precartilaginous condensation, the first step in chondrogenesis during which skeletal progenitors differentiate into prechondrocytes. Together with SOX5 and SOX6, required for overt chondrogenesis when condensed prechondrocytes differentiate into early stage chondrocytes, the second step in chondrogenesis. Later, required to direct hypertrophic maturation and block osteoblast differentiation of growth plate chondrocytes: maintains chondrocyte columnar proliferation, delays prehypertrophy and then prevents osteoblastic differentiation of chondrocytes. Also required for chondrocyte hypertrophy, both indirectly, by keeping the lineage fate of chondrocytes, and directly, by remaining present in upper hypertrophic cells. Low lipid levels are the main nutritional determinant for chondrogenic commitment of skeletal progenitor cells: when lipids levels are low, FOXO transcription factors promote expression of SOX9, which induces chondrogenic commitment and suppresses fatty acid oxidation. In addition to cartilage development, also acts as a regulator of proliferation and differentiation in epithelial stem/progenitor cells. In response to bone morphogenetic protein stimulus, phosphorylation is induced and then sumoylation, allowing cooperation with SNAI2 to trigger neural crest delamination. This Gallus gallus (Chicken) protein is Transcription factor SOX-9.